A 390-amino-acid chain; its full sequence is uncharacterized protein (390 aa).

This is an uncharacterized protein from Acanthamoeba polyphaga (Amoeba).